The following is a 497-amino-acid chain: Probable cytosol aminopeptidase (497 aa).

Residues Lys-263 and Asp-268 each contribute to the Mn(2+) site. The active site involves Lys-275. The Mn(2+) site is built by Asp-286, Asp-345, and Glu-347. The active site involves Arg-349.

This sequence belongs to the peptidase M17 family. It depends on Mn(2+) as a cofactor.

The protein localises to the cytoplasm. It catalyses the reaction Release of an N-terminal amino acid, Xaa-|-Yaa-, in which Xaa is preferably Leu, but may be other amino acids including Pro although not Arg or Lys, and Yaa may be Pro. Amino acid amides and methyl esters are also readily hydrolyzed, but rates on arylamides are exceedingly low.. The catalysed reaction is Release of an N-terminal amino acid, preferentially leucine, but not glutamic or aspartic acids.. Presumably involved in the processing and regular turnover of intracellular proteins. Catalyzes the removal of unsubstituted N-terminal amino acids from various peptides. The polypeptide is Probable cytosol aminopeptidase (Allorhizobium ampelinum (strain ATCC BAA-846 / DSM 112012 / S4) (Agrobacterium vitis (strain S4))).